A 225-amino-acid polypeptide reads, in one-letter code: Phosphoserine phosphatase (225 aa).

Methionine 1 bears the N-acetylmethionine mark. The Nucleophile role is filled by aspartate 20. Mg(2+) is bound by residues aspartate 20 and aspartate 22. Residue 20 to 22 (DVD) participates in L-serine binding. Aspartate 22 serves as the catalytic Proton donor. O-phospho-L-serine is bound at residue methionine 52. Residue glycine 53 coordinates phosphate. Residues 109-111 (SGG) and lysine 158 contribute to the L-serine site. O-phospho-L-serine-binding positions include 109–111 (SGG) and lysine 158. Aspartate 179 serves as a coordination point for Mg(2+). Threonine 182 lines the O-phospho-L-serine pocket. Threonine 182 serves as a coordination point for phosphate.

It belongs to the HAD-like hydrolase superfamily. SerB family. As to quaternary structure, homodimer. It depends on Mg(2+) as a cofactor.

The protein localises to the cytoplasm. It is found in the cytosol. It carries out the reaction O-phospho-L-serine + H2O = L-serine + phosphate. It catalyses the reaction O-phospho-D-serine + H2O = D-serine + phosphate. The protein operates within amino-acid biosynthesis; L-serine biosynthesis; L-serine from 3-phospho-D-glycerate: step 3/3. With respect to regulation, inhibited by calcium ions. Its function is as follows. Catalyzes the last irreversible step in the biosynthesis of L-serine from carbohydrates, the dephosphorylation of O-phospho-L-serine to L-serine. L-serine can then be used in protein synthesis, to produce other amino acids, in nucleotide metabolism or in glutathione synthesis, or can be racemized to D-serine, a neuromodulator. May also act on O-phospho-D-serine. The sequence is that of Phosphoserine phosphatase from Homo sapiens (Human).